The sequence spans 1603 residues: Gag-Pol polyprotein (1603 aa).

Basic and acidic residues predominate over residues 128–141 (VGETTVQRDAKMAP). The disordered stretch occupies residues 128–150 (VGETTVQRDAKMAPEETATPKTV). Residues 172–175 (PPPY) carry the PPXY motif motif. Residues 180 to 184 (LYPSL) carry the LYPX(n)L motif motif. The tract at residues 181–217 (YPSLAGVGEQQGQGGDTPPGAEQSRAEPGHAGQAPGP) is disordered. 3 involved in capsid protein dimerization regions span residues 217–259 (PALT…KLIT), 290–298 (HDVTNLMRV), and 351–362 (GMVGNPQGQAAL). Residues 219 to 229 (LTDWARVREEL) carry the Nuclear export signal motif. 2 consecutive CCHC-type zinc fingers follow at residues 507–524 (GLCY…QCPK) and 533–550 (ERCQ…QCRK). A Nuclear/nucleolar localization signal motif is present at residues 524–527 (KKRK). A disordered region spans residues 543-575 (HNAKQCRKRDGNQGQRPGKGLSSGPWPGPEPPA). One can recognise a Peptidase A2 domain in the interval 609–690 (ITALLDSGAD…VRGSILGRDC (82 aa)). Residue D614 is the For protease activity; shared with dimeric partner of the active site. Positions 750–938 (LQLGHIEPSL…PGVQYLGYKL (189 aa)) constitute a Reverse transcriptase domain. D815, D890, D891, D1158, E1192, D1213, and D1272 together coordinate Mg(2+). In terms of domain architecture, RNase H type-1 spans 1149-1280 (PVPGPTVFTD…ADSQATFQAY (132 aa)). The Integrase-type zinc finger occupies 1280–1321 (YPLREAKDLHTALHIGPRALSKACNISMQQAREVVQTCPHCN). The Zn(2+) site is built by H1289, H1293, C1317, and C1320. The region spanning 1333–1496 (RGLGPLQIWQ…TPIQKHWRPT (164 aa)) is the Integrase catalytic domain. Mg(2+) contacts are provided by D1344, D1401, and E1437. The segment at residues 1502 to 1550 (PPVKIRIETGEWEKGWNVLVWGRGYAAVKNRDTDKVIWVPSRKVKPDIT) is a DNA-binding region (integrase-type). The segment at 1548-1567 (DITQKDEVTKKDEASPLFAG) is involved in homooctamerization. A disordered region spans residues 1569-1603 (SDWIPWEDEQEGLQGETASNKQERPGEDTLAANES).

Active as a homodimer. In terms of assembly, homodimer. Homomultimer. Homohexamer. As to quaternary structure, homodimer; further associates as a homooctamer. Heterodimer of alpha and beta subunits. Three forms of RT exist: alpha-alpha (alpha-Pol), beta-beta (beta-Pol), and alpha-beta, with the major form being the heterodimer. Both the polymerase and RNase H active sites are located in the alpha subunit of heterodimeric RT alpha-beta. The cofactor is Mg(2+). Mn(2+) serves as cofactor. Specific enzymatic cleavages in vivo yield mature proteins. Post-translationally, capsid protein p27: The cleavage at the C-terminus is slowly trimmed by the viral protease, sometimes being cut internally thereby generating the short version of the capsid protein and a capsid protein C-terminally extended by 3 amino acids in a ratio of 2:1.

It localises to the virion. The enzyme catalyses DNA(n) + a 2'-deoxyribonucleoside 5'-triphosphate = DNA(n+1) + diphosphate. It catalyses the reaction Endonucleolytic cleavage to 5'-phosphomonoester.. Its function is as follows. Capsid protein p27: Self-associates to form the irregular polyhedron core composed of hexamers and pentamers, that encapsulates the genomic RNA-nucleocapsid complex. Assembles as a tube in vitro. Binds to inositol hexakisphosphate (IP6), which allows the assembly of the polyhedral capsid. Functionally, plays a role in the oligomerization of the Gag polyprotein and in the stabilization of the immature particle. Essential layering element during tube assembly. Allows the cooperative binging of Gag to the host plasma membrane. Binds strongly to viral nucleic acids and promotes their packaging. Plays a role in the maturation-stabilization of the viral dimeric RNA via highly structured zinc-binding motifs. In terms of biological role, the aspartyl protease mediates proteolytic cleavages of Gag and Gag-Pol polyproteins during or shortly after the release of the virion from the plasma membrane. Cleavages take place as an ordered, step-wise cascade to yield mature proteins. This process is called maturation. Displays maximal activity during the budding process just prior to particle release from the cell. Its function is as follows. Catalyzes viral DNA integration into the host chromosome, by performing a series of DNA cutting and joining reactions. This recombination event is an essential step in the viral replication cycle. Has a strong preference for using the 3'-OH at the viral DNA end as a nucleophile. The polypeptide is Gag-Pol polyprotein (gag-pol) (Gallus gallus (Chicken)).